We begin with the raw amino-acid sequence, 258 residues long: 6-phosphogluconolactonase (258 aa).

Position 2 is an N-acetylalanine (Ala-2). Residue Ser-49 is modified to Phosphoserine. N6-acetyllysine is present on Lys-180.

It belongs to the glucosamine/galactosamine-6-phosphate isomerase family. 6-phosphogluconolactonase subfamily.

The protein resides in the cytoplasm. It catalyses the reaction 6-phospho-D-glucono-1,5-lactone + H2O = 6-phospho-D-gluconate + H(+). The protein operates within carbohydrate degradation; pentose phosphate pathway; D-ribulose 5-phosphate from D-glucose 6-phosphate (oxidative stage): step 2/3. Functionally, hydrolysis of 6-phosphogluconolactone to 6-phosphogluconate. This chain is 6-phosphogluconolactonase, found in Homo sapiens (Human).